We begin with the raw amino-acid sequence, 370 residues long: Molybdenum import ATP-binding protein ModC (370 aa).

The 232-residue stretch at 2–233 (SVRVDIGHRL…LDLLPAEERG (232 aa)) folds into the ABC transporter domain. 31–38 (GPSGSGKT) lines the ATP pocket. In terms of domain architecture, Mop spans 293 to 359 (GLSALNILPG…VKTVSFDRAN (67 aa)).

Belongs to the ABC transporter superfamily. Molybdate importer (TC 3.A.1.8) family. In terms of assembly, the complex is composed of two ATP-binding proteins (ModC), two transmembrane proteins (ModB) and a solute-binding protein (ModA).

It is found in the cell inner membrane. The catalysed reaction is molybdate(out) + ATP + H2O = molybdate(in) + ADP + phosphate + H(+). Its function is as follows. Part of the ABC transporter complex ModABC involved in molybdenum import. Responsible for energy coupling to the transport system. The protein is Molybdenum import ATP-binding protein ModC of Mesorhizobium japonicum (strain LMG 29417 / CECT 9101 / MAFF 303099) (Mesorhizobium loti (strain MAFF 303099)).